The following is a 471-amino-acid chain: Glutamate--tRNA ligase (471 aa).

The 'HIGH' region motif lies at 9–19 (PSPTGYLHVGG). 4 residues coordinate Zn(2+): Cys98, Cys100, Cys125, and His127. A 'KMSKS' region motif is present at residues 237-241 (KLSKR). An ATP-binding site is contributed by Lys240.

It belongs to the class-I aminoacyl-tRNA synthetase family. Glutamate--tRNA ligase type 1 subfamily. As to quaternary structure, monomer. Zn(2+) is required as a cofactor.

The protein localises to the cytoplasm. The catalysed reaction is tRNA(Glu) + L-glutamate + ATP = L-glutamyl-tRNA(Glu) + AMP + diphosphate. Its function is as follows. Catalyzes the attachment of glutamate to tRNA(Glu) in a two-step reaction: glutamate is first activated by ATP to form Glu-AMP and then transferred to the acceptor end of tRNA(Glu). This is Glutamate--tRNA ligase from Salmonella choleraesuis (strain SC-B67).